Reading from the N-terminus, the 669-residue chain is MGSNSSRIGDLPKNEYLKKLSGTESISENDPFWNQLLSFSFPAPTSSSELKLLEEATISVCRSLVENNPRTGNLGALIKVFLSRTKELKLSAECQNHIFIWQTHNALFIICCLLKVFICQMSEEELQLHFTYEEKSPGNYSSDSEDLLEELLCCLMQLITDIPLLDITYEISVEAISTMVVFLSCQLFHKEVLRQSISHKYLMRGPCLPYTSKLVKTLLYNFIRQEKPPPPGAHVFPQQSDGGGLLYGLASGVATGLWTVFTLGGVGSKAAASPELSSPLANQSLLLLLVLANLTDASDAPNPYRQAIMSFKNTQDSSPFPSSIPHAFQINFNSLYTALCEQQTSDQATLLLYTLLHQNSNIRTYMLARTDMENLVLPILEILYHVEERNSHHVYMALIILLILTEDDGFNRSIHEVILKNITWYSERVLTEISLGSLLILVVIRTIQYNMTRTRDKYLHTNCLAALANMSAQFRSLHQYAAQRIISLFSLLSKKHNKVLEQATQSLRGSLSSNDVPLPDYAQDLNVIEEVIRMMLEIINSCLTNSLHHNPNLVYALLYKRDLFEQFRTHPSFQDIMQNIDLVISFFSSRLLQAGAELSVERVLEIIKQGVVALPKDRLKKFPELKFKYVEEEQPEEFFIPYVWSLVYNSAVGLYWNPQDIQLFTMDSD.

Gly2 carries the N-myristoyl glycine lipid modification.

Belongs to the dymeclin family. Interacts with GOLM1 and PPIB. Post-translationally, myristoylated in vitro; myristoylation is not essential for protein targeting to Golgi compartment. Expressed in most embryo-fetal and adult tissues. Abundant in primary chondrocytes, osteoblasts, cerebellum, kidney, lung, stomach, heart, pancreas and fetal brain. Very low or no expression in the spleen, thymus, esophagus, bladder and thyroid gland.

The protein localises to the cytoplasm. Its subcellular location is the golgi apparatus. It localises to the membrane. Its function is as follows. Necessary for correct organization of Golgi apparatus. Involved in bone development. The protein is Dymeclin (DYM) of Homo sapiens (Human).